We begin with the raw amino-acid sequence, 169 residues long: Allophycocyanin subunit beta-18 (169 aa).

At N72 the chain carries N4-methylasparagine. (2R,3E)-phycocyanobilin is bound at residue C82.

Belongs to the phycobiliprotein family. Heterodimer of an alpha and a beta chain. In terms of processing, contains one covalently linked bilin chromophore.

The protein localises to the plastid. Its subcellular location is the chloroplast thylakoid membrane. Light-harvesting photosynthetic bile pigment-protein from the phycobiliprotein complex. Allophycocyanin has a maximum absorption at approximately 650 nanometers. This Porphyra purpurea (Red seaweed) protein is Allophycocyanin subunit beta-18 (apcF).